The chain runs to 282 residues: Trans,polycis-polyprenyl diphosphate synthase ((2Z,6E)-farnesyl diphosphate specific) (282 aa).

The segment at 1 to 30 (MSPKTVFSTDTHREPIPPQPHPSGARPPQL) is disordered. Asp-44 is a catalytic residue. Asp-44 lines the Mg(2+) pocket. Substrate is bound by residues 45-48 (GNGR), Trp-49, Arg-57, His-61, and 89-91 (STE). Asn-92 acts as the Proton acceptor in catalysis. Substrate is bound by residues Trp-93, Arg-95, Arg-212, and 218–220 (RLS). Glu-231 provides a ligand contact to Mg(2+). Residues 262–282 (GGAEPNPVGPPQSAAGAQGQD) are disordered.

Belongs to the UPP synthase family. Homodimer. It depends on Mg(2+) as a cofactor.

The enzyme catalyses (2Z,6E)-farnesyl diphosphate + 10 isopentenyl diphosphate = di-trans,deca-cis-tridecaprenyl diphosphate + 10 diphosphate. It carries out the reaction (2Z,6E)-farnesyl diphosphate + 11 isopentenyl diphosphate = di-trans,undeca-cis-tetradecaprenyl diphosphate + 11 diphosphate. It catalyses the reaction (2Z,6E)-farnesyl diphosphate + 9 isopentenyl diphosphate = di-trans,nona-cis-dodecaprenyl diphosphate + 9 diphosphate. Its function is as follows. Catalyzes the synthesis of Z,E-mixed prenyl diphosphates by a condensation of isopentenyl diphosphate to an allylic diphosphate. It shows a large substrate specificity accepting dimethylallyl diphosphate (DMAPP), GPP, E,Efarnesyl diphosphate (FPP), E,E,E-geranylgeranyl diphosphate (GGPP), neryl diphosphate (Z-GPP), and (2Z,6E)-farnesyl diphosphate (Z,E-FPP) as allylic substrates. The enzyme exhibits the highest activity when Z,E-FPP is employed as an allylic substrate. The major product is dodecaprenyl diphosphate (C60) under every allylic substrate conditions, but the enzyme is also able to synthesize even C70 prenyl diphosphate as the maximum chain-length product. The protein is Trans,polycis-polyprenyl diphosphate synthase ((2Z,6E)-farnesyl diphosphate specific) of Thermobifida fusca (strain YX).